The chain runs to 411 residues: Phosphoglycerate kinase (411 aa).

The segment at 1 to 24 is disordered; sequence MTGLCPLHQPSPLDHPHSGGTPMQ. Substrate is bound by residues 41-43, Arg56, 79-82, Arg139, and Arg172; these read DYN and HFGR. ATP is bound by residues Lys222, Gly310, Glu341, and 369 to 372; that span reads GGDS.

Belongs to the phosphoglycerate kinase family. As to quaternary structure, monomer.

It is found in the cytoplasm. The catalysed reaction is (2R)-3-phosphoglycerate + ATP = (2R)-3-phospho-glyceroyl phosphate + ADP. The protein operates within carbohydrate degradation; glycolysis; pyruvate from D-glyceraldehyde 3-phosphate: step 2/5. This Deinococcus radiodurans (strain ATCC 13939 / DSM 20539 / JCM 16871 / CCUG 27074 / LMG 4051 / NBRC 15346 / NCIMB 9279 / VKM B-1422 / R1) protein is Phosphoglycerate kinase.